Here is a 445-residue protein sequence, read N- to C-terminus: Glutamate--tRNA ligase 1 (445 aa).

Positions 10–20 match the 'HIGH' region motif; the sequence is PSPTGMLHVGN. Residues 240 to 244 carry the 'KMSKS' region motif; that stretch reads KISKR. Lys-243 lines the ATP pocket.

This sequence belongs to the class-I aminoacyl-tRNA synthetase family. Glutamate--tRNA ligase type 1 subfamily. In terms of assembly, monomer.

The protein resides in the cytoplasm. It catalyses the reaction tRNA(Glu) + L-glutamate + ATP = L-glutamyl-tRNA(Glu) + AMP + diphosphate. In terms of biological role, catalyzes the attachment of glutamate to tRNA(Glu) in a two-step reaction: glutamate is first activated by ATP to form Glu-AMP and then transferred to the acceptor end of tRNA(Glu). The chain is Glutamate--tRNA ligase 1 from Rickettsia bellii (strain OSU 85-389).